We begin with the raw amino-acid sequence, 114 residues long: Transmembrane protein 14C (114 aa).

The next 4 membrane-spanning stretches (helical) occupy residues 8–28 (LMPL…GGII), 33–53 (AGSV…GLGA), 63–83 (VWVF…RFYN), and 89–109 (PAGL…ISLL).

It belongs to the TMEM14 family.

The protein localises to the mitochondrion membrane. Required for normal heme biosynthesis. The protein is Transmembrane protein 14C (Tmem14c) of Mus musculus (Mouse).